The sequence spans 186 residues: Elongation factor P (186 aa).

This sequence belongs to the elongation factor P family.

Its subcellular location is the cytoplasm. The protein operates within protein biosynthesis; polypeptide chain elongation. In terms of biological role, involved in peptide bond synthesis. Stimulates efficient translation and peptide-bond synthesis on native or reconstituted 70S ribosomes in vitro. Probably functions indirectly by altering the affinity of the ribosome for aminoacyl-tRNA, thus increasing their reactivity as acceptors for peptidyl transferase. This is Elongation factor P from Shewanella denitrificans (strain OS217 / ATCC BAA-1090 / DSM 15013).